The following is a 125-amino-acid chain: Large ribosomal subunit protein bL19 (125 aa).

This sequence belongs to the bacterial ribosomal protein bL19 family.

This protein is located at the 30S-50S ribosomal subunit interface and may play a role in the structure and function of the aminoacyl-tRNA binding site. This chain is Large ribosomal subunit protein bL19, found in Ehrlichia ruminantium (strain Welgevonden).